A 1921-amino-acid chain; its full sequence is Putative callose synthase 6 (1921 aa).

Residues 1–23 are disordered; sequence MEASSSGTAELPRSLSRRAPSRA. The Cytoplasmic portion of the chain corresponds to 1-492; sequence MEASSSGTAE…FWNLFRDFDR (492 aa). Residues 493-513 form a helical membrane-spanning segment; that stretch reads MWIFLVMAFQAMVIVGWHGSG. The Extracellular segment spans residues 514–526; sequence SLGDIFDKDVFKT. A helical membrane pass occupies residues 527-547; that stretch reads VLTIFITSAYLTLLQAALDII. Over 548–560 the chain is Cytoplasmic; sequence LNFNAWKNFKFSQ. A helical transmembrane segment spans residues 561–581; that stretch reads ILRYLLKFAVAFMWAVLLPIA. Residues 582 to 611 are Extracellular-facing; sequence YSKSVQRPTGVVKFFSTWTGDWKDQSFYTY. A helical transmembrane segment spans residues 612 to 632; the sequence is AVSFYVLPNILAALLFLVPPF. The Cytoplasmic segment spans residues 633–674; sequence RRAMECSDMRPIKVIMWWAQPKLYVGRGMHEDMFSLFKYTTF. A helical membrane pass occupies residues 675 to 695; that stretch reads WIMLLISKLAFNYYVEILPLI. Residues 696–721 are Extracellular-facing; that stretch reads TPTKMIMNLHIGHYQWHEFFPHATNN. A helical membrane pass occupies residues 722–742; that stretch reads IGVVIAIWAPIVLVYLMDTQI. At 743–1484 the chain is on the cytoplasmic side; sequence WYAIFSTLFG…FDFYRMLSFY (742 aa). Residues 1485-1505 traverse the membrane as a helical segment; sequence FTTIGFYFSSMLTVLTVYAFL. Over 1506 to 1540 the chain is Extracellular; it reads YGRMYMVMSGLEKEILRLASPNQLEALEQALATQS. A helical transmembrane segment spans residues 1541-1561; sequence IFQLGFLMVLPMVMEIGLEHG. Residues 1562 to 1564 are Cytoplasmic-facing; the sequence is FRS. Residues 1565 to 1585 traverse the membrane as a helical segment; sequence AIVDFFIMQLQLASVFFTFQL. The Extracellular portion of the chain corresponds to 1586 to 1628; it reads GTKSHYYGRTILHGGSKYRPTGRGFVVFHAKFAENYRLYSRSH. Residues 1629–1649 form a helical membrane-spanning segment; the sequence is FVKGLELLLLLVVYQIYGHSY. Residues 1650 to 1655 are Cytoplasmic-facing; that stretch reads RSSNLY. The chain crosses the membrane as a helical span at residues 1656-1676; the sequence is LYITVSMWFMVGSWLFAPFIF. Residues 1677–1730 are Extracellular-facing; it reads NPSGFEWQKTVDDWTDWKRWLGDRGGIGIPVEKSWESWWNVEQEHLKHTSIRGR. A helical membrane pass occupies residues 1731 to 1751; it reads ILEITLALRFFIYQYGIVYQL. Topologically, residues 1752–1759 are cytoplasmic; it reads NISQRSKS. The helical transmembrane segment at 1760-1780 threads the bilayer; sequence FLVYGLSWVVLLTSLLVLKMV. The Extracellular segment spans residues 1781–1796; it reads SMGRRRFGTDFQLMFR. A helical transmembrane segment spans residues 1797–1817; the sequence is ILKALLFLGFLSVMTILFVVF. The Cytoplasmic segment spans residues 1818–1823; the sequence is KLTLTD. Residues 1824–1844 form a helical membrane-spanning segment; sequence LSASVLAFLPTGWAILLIGQV. Over 1845–1867 the chain is Extracellular; the sequence is LRSPIKALGVWDSVKELGRAYEN. A helical transmembrane segment spans residues 1868–1888; sequence IMGLVIFAPIAVLSWFPIVSE. Residues 1889–1921 lie on the Cytoplasmic side of the membrane; sequence FQARLLFNQAFSRGLQISMILAGRKDKATSSHK.

It belongs to the glycosyltransferase 48 family.

Its subcellular location is the cell membrane. The enzyme catalyses [(1-&gt;3)-beta-D-glucosyl](n) + UDP-alpha-D-glucose = [(1-&gt;3)-beta-D-glucosyl](n+1) + UDP + H(+). Probably involved in callose synthesis, but not required for callose formation after wounding or pathogen attack. During plant growth and development, callose is found as a transitory component of the cell plate in dividing cells, is a major component of pollen mother cell walls and pollen tubes, and is found as a structural component of plasmodesmatal canals. The chain is Putative callose synthase 6 (CALS6) from Arabidopsis thaliana (Mouse-ear cress).